Consider the following 183-residue polypeptide: Apo-citrate lyase phosphoribosyl-dephospho-CoA transferase (183 aa).

This sequence belongs to the CitX family.

The enzyme catalyses apo-[citrate lyase ACP] + 2'-(5''-triphospho-alpha-D-ribosyl)-3'-dephospho-CoA = holo-[citrate lyase ACP] + diphosphate. In terms of biological role, transfers 2-(5''-triphosphoribosyl)-3'-dephosphocoenzyme-A on a serine residue to the apo-acyl carrier protein (gamma chain) of the citrate lyase to yield holo-acyl carrier protein. This chain is Apo-citrate lyase phosphoribosyl-dephospho-CoA transferase, found in Escherichia coli O9:H4 (strain HS).